Reading from the N-terminus, the 141-residue chain is Large ribosomal subunit protein uL16 (141 aa).

Residues 1–17 (MLQPKRTKYRKVQKGRM) are compositionally biased toward basic residues. Residues 1 to 29 (MLQPKRTKYRKVQKGRMKGNSQRGHELSN) are disordered.

The protein belongs to the universal ribosomal protein uL16 family. As to quaternary structure, part of the 50S ribosomal subunit.

Functionally, binds 23S rRNA and is also seen to make contacts with the A and possibly P site tRNAs. The sequence is that of Large ribosomal subunit protein uL16 from Flavobacterium johnsoniae (strain ATCC 17061 / DSM 2064 / JCM 8514 / BCRC 14874 / CCUG 350202 / NBRC 14942 / NCIMB 11054 / UW101) (Cytophaga johnsonae).